A 134-amino-acid chain; its full sequence is ATP synthase epsilon chain (134 aa).

This sequence belongs to the ATPase epsilon chain family. As to quaternary structure, F-type ATPases have 2 components, CF(1) - the catalytic core - and CF(0) - the membrane proton channel. CF(1) has five subunits: alpha(3), beta(3), gamma(1), delta(1), epsilon(1). CF(0) has three main subunits: a, b and c.

Its subcellular location is the cell membrane. Functionally, produces ATP from ADP in the presence of a proton gradient across the membrane. This Listeria welshimeri serovar 6b (strain ATCC 35897 / DSM 20650 / CCUG 15529 / CIP 8149 / NCTC 11857 / SLCC 5334 / V8) protein is ATP synthase epsilon chain.